The chain runs to 620 residues: Aspartic protease 1 (620 aa).

Topologically, residues 1–110 (MSPSSRFRNL…LGKAVGLSTS (110 aa)) are cytoplasmic. The propeptide occupies 1–258 (MSPSSRFRNL…SKKDDGNLSG (258 aa)). Residues 27-31 (YASLL) form an important for proper cellular trafficking region. A helical; Signal-anchor for type II membrane protein membrane pass occupies residues 111 to 131 (VICVVALFGIVCLCLYGLVNF). At 132–620 (SFTSVETSPL…KQIGFARLKN (489 aa)) the chain is on the lumenal side. The disordered stretch occupies residues 138-174 (TSPLDDPRNSPVMGELGNPQASTPSSARADTPARHDR). Positions 156 to 165 (PQASTPSSAR) are enriched in polar residues. The Peptidase A1 domain occupies 275-616 (YYTEIYVGSP…DYDNKQIGFA (342 aa)). Catalysis depends on residues aspartate 293 and aspartate 476. A disulfide bond links cysteine 513 and cysteine 550.

This sequence belongs to the peptidase A1 family. Proteolytically cleaved into the soluble active mature form by, at least, cysteine protease CPL. Undergoes at least four processing steps; the first cleavage removes the propeptide resulting in the production of a soluble 45 kDa protein, which is further processed into a 35 kDa form followed by an additional processing into the final active 30 kDa form.

It is found in the membrane. The protein localises to the vacuole. In terms of biological role, aspartyl protease which is dispensable for protein degradation in the vacuolar compartment (VAC) or for tachyzoite and bradyzoite viability. This is Aspartic protease 1 from Toxoplasma gondii.